Here is a 386-residue protein sequence, read N- to C-terminus: MAFVSCFHLRLLFLCLALFMAAECRPDELNKKVDSDETISDDDVSARVQPNGGKIMIVRDNDYDASDDNDNDNDDDDNNDNDNDNDDDNDVDRDNDNDDDDFDDSNDDMLSFELDSIEEKDSDGNDVGSTEGHSVESFEDRPFSLSSVDRNSNALGVAAINVNLSTKLEDSNADVDIMLYLFREDGTISFGNETFDVQAGTVKFNIKISNWDFCDGSAQDCSEAKAGEYLDVNIKFKSKDTPIEVTDEERKSQNKPAVCKDKDTPDTDSDPDDSSDNANDGDDDDDDDCPHIYNMGGDSEMLLNRGVMNGDTYTAMPFGFPKVEIEDGEKKIKFRVPKFDDNVNIDPSVTPGRVPKNASPSPALCLKIHILFIALLQAVTLFINSW.

The first 24 residues, M1–C24, serve as a signal peptide directing secretion. Disordered stretches follow at residues V33–L145 and E244–H291. Over residues Y63–D107 the composition is skewed to acidic residues. 2 stretches are compositionally biased toward basic and acidic residues: residues H133–P142 and E244–P265. The span at D266 to D288 shows a compositional bias: acidic residues.

As to expression, component of the acid-insoluble and acid-soluble organic matrix of the aragonitic skeleton (at protein level).

It localises to the secreted. This Acropora millepora (Staghorn coral) protein is Skeletal aspartic acid-rich protein 1.